A 438-amino-acid polypeptide reads, in one-letter code: Enolase (438 aa).

Q163 lines the (2R)-2-phosphoglycerate pocket. E205 acts as the Proton donor in catalysis. Mg(2+) contacts are provided by D243, E292, and D319. Residues K344, R373, S374, and K395 each contribute to the (2R)-2-phosphoglycerate site. K344 (proton acceptor) is an active-site residue.

Belongs to the enolase family. Requires Mg(2+) as cofactor.

The protein resides in the cytoplasm. Its subcellular location is the secreted. It is found in the cell surface. The catalysed reaction is (2R)-2-phosphoglycerate = phosphoenolpyruvate + H2O. It functions in the pathway carbohydrate degradation; glycolysis; pyruvate from D-glyceraldehyde 3-phosphate: step 4/5. Catalyzes the reversible conversion of 2-phosphoglycerate (2-PG) into phosphoenolpyruvate (PEP). It is essential for the degradation of carbohydrates via glycolysis. In Streptococcus agalactiae, this protein is Enolase.